The primary structure comprises 511 residues: Chromosomal replication initiator protein DnaA (511 aa).

Residues 1 to 87 are domain I, interacts with DnaA modulators; sequence MSVELWQQCV…IGSKRSSAPR (87 aa). The tract at residues 87–174 is domain II; sequence RAAPNAPLAA…QVEGALKHTS (88 aa). The segment at 133 to 160 is disordered; sequence VATHDEPSRDSFDPMAGASSQQAPARAE. Residues 134-144 are compositionally biased toward basic and acidic residues; that stretch reads ATHDEPSRDSF. Residues 175–391 are domain III, AAA+ region; the sequence is YLNRTFTFEN…GALKRVIAHS (217 aa). ATP contacts are provided by Gly-219, Gly-221, Lys-222, and Thr-223. Residues 392-511 are domain IV, binds dsDNA; the sequence is HFMGRDITIE…YKNLLRTLTT (120 aa).

It belongs to the DnaA family. As to quaternary structure, oligomerizes as a right-handed, spiral filament on DNA at oriC.

It is found in the cytoplasm. Functionally, plays an essential role in the initiation and regulation of chromosomal replication. ATP-DnaA binds to the origin of replication (oriC) to initiate formation of the DNA replication initiation complex once per cell cycle. Binds the DnaA box (a 9 base pair repeat at the origin) and separates the double-stranded (ds)DNA. Forms a right-handed helical filament on oriC DNA; dsDNA binds to the exterior of the filament while single-stranded (ss)DNA is stabiized in the filament's interior. The ATP-DnaA-oriC complex binds and stabilizes one strand of the AT-rich DNA unwinding element (DUE), permitting loading of DNA polymerase. After initiation quickly degrades to an ADP-DnaA complex that is not apt for DNA replication. Binds acidic phospholipids. In Pseudomonas syringae pv. tomato (strain ATCC BAA-871 / DC3000), this protein is Chromosomal replication initiator protein DnaA.